Consider the following 198-residue polypeptide: Holliday junction branch migration complex subunit RuvA (198 aa).

The tract at residues 1-63 (MYDYIKGQLT…EDAHLLFGFH (63 aa)) is domain I. The segment at 64–142 (TEDEKDVFLK…EAPQETGHTK (79 aa)) is domain II. The segment at 143-147 (ARSNK) is flexible linker. A domain III region spans residues 148-198 (AGNTQLDEAIEALLALGYTATELKKIRAFFEGTSETAEQYIKSALKLLMKG).

This sequence belongs to the RuvA family. As to quaternary structure, homotetramer. Forms an RuvA(8)-RuvB(12)-Holliday junction (HJ) complex. HJ DNA is sandwiched between 2 RuvA tetramers; dsDNA enters through RuvA and exits via RuvB. An RuvB hexamer assembles on each DNA strand where it exits the tetramer. Each RuvB hexamer is contacted by two RuvA subunits (via domain III) on 2 adjacent RuvB subunits; this complex drives branch migration. In the full resolvosome a probable DNA-RuvA(4)-RuvB(12)-RuvC(2) complex forms which resolves the HJ.

It localises to the cytoplasm. The RuvA-RuvB-RuvC complex processes Holliday junction (HJ) DNA during genetic recombination and DNA repair, while the RuvA-RuvB complex plays an important role in the rescue of blocked DNA replication forks via replication fork reversal (RFR). RuvA specifically binds to HJ cruciform DNA, conferring on it an open structure. The RuvB hexamer acts as an ATP-dependent pump, pulling dsDNA into and through the RuvAB complex. HJ branch migration allows RuvC to scan DNA until it finds its consensus sequence, where it cleaves and resolves the cruciform DNA. This chain is Holliday junction branch migration complex subunit RuvA, found in Streptococcus pyogenes serotype M49 (strain NZ131).